The chain runs to 508 residues: Photosystem II CP47 reaction center protein (508 aa).

A run of 6 helical transmembrane segments spans residues A21 to S36, I101 to W115, G140 to F156, I203 to S218, V237 to V252, and T457 to R472.

It belongs to the PsbB/PsbC family. PsbB subfamily. PSII is composed of 1 copy each of membrane proteins PsbA, PsbB, PsbC, PsbD, PsbE, PsbF, PsbH, PsbI, PsbJ, PsbK, PsbL, PsbM, PsbT, PsbX, PsbY, PsbZ, Psb30/Ycf12, at least 3 peripheral proteins of the oxygen-evolving complex and a large number of cofactors. It forms dimeric complexes. The cofactor is Binds multiple chlorophylls. PSII binds additional chlorophylls, carotenoids and specific lipids..

The protein localises to the plastid. It localises to the chloroplast thylakoid membrane. One of the components of the core complex of photosystem II (PSII). It binds chlorophyll and helps catalyze the primary light-induced photochemical processes of PSII. PSII is a light-driven water:plastoquinone oxidoreductase, using light energy to abstract electrons from H(2)O, generating O(2) and a proton gradient subsequently used for ATP formation. In Triticum aestivum (Wheat), this protein is Photosystem II CP47 reaction center protein.